Here is a 285-residue protein sequence, read N- to C-terminus: ATP synthase gamma chain (285 aa).

This sequence belongs to the ATPase gamma chain family. In terms of assembly, F-type ATPases have 2 components, CF(1) - the catalytic core - and CF(0) - the membrane proton channel. CF(1) has five subunits: alpha(3), beta(3), gamma(1), delta(1), epsilon(1). CF(0) has three main subunits: a, b and c.

Its subcellular location is the cell membrane. Functionally, produces ATP from ADP in the presence of a proton gradient across the membrane. The gamma chain is believed to be important in regulating ATPase activity and the flow of protons through the CF(0) complex. The chain is ATP synthase gamma chain from Lysinibacillus sphaericus (strain C3-41).